We begin with the raw amino-acid sequence, 122 residues long: Large-conductance mechanosensitive channel (122 aa).

2 helical membrane passes run 14-34 (VLDL…VKSL) and 67-87 (GAFL…FILI).

It belongs to the MscL family. Homopentamer.

It is found in the cell membrane. Its function is as follows. Channel that opens in response to stretch forces in the membrane lipid bilayer. May participate in the regulation of osmotic pressure changes within the cell. The chain is Large-conductance mechanosensitive channel from Lactococcus lactis subsp. lactis (strain IL1403) (Streptococcus lactis).